Reading from the N-terminus, the 566-residue chain is Oxygen-dependent choline dehydrogenase (566 aa).

D7–E36 contacts FAD. Residues Y182–A204 are disordered. H474 serves as the catalytic Proton acceptor.

It belongs to the GMC oxidoreductase family. Requires FAD as cofactor.

It catalyses the reaction choline + A = betaine aldehyde + AH2. The enzyme catalyses betaine aldehyde + NAD(+) + H2O = glycine betaine + NADH + 2 H(+). It participates in amine and polyamine biosynthesis; betaine biosynthesis via choline pathway; betaine aldehyde from choline (cytochrome c reductase route): step 1/1. Functionally, involved in the biosynthesis of the osmoprotectant glycine betaine. Catalyzes the oxidation of choline to betaine aldehyde and betaine aldehyde to glycine betaine at the same rate. The polypeptide is Oxygen-dependent choline dehydrogenase (Burkholderia multivorans (strain ATCC 17616 / 249)).